Reading from the N-terminus, the 103-residue chain is UPF0298 protein LACR_0404 (103 aa).

The protein belongs to the UPF0298 family.

It localises to the cytoplasm. The chain is UPF0298 protein LACR_0404 from Lactococcus lactis subsp. cremoris (strain SK11).